A 104-amino-acid polypeptide reads, in one-letter code: Nucleoid-associated protein Moth_0028 (104 aa).

The protein belongs to the YbaB/EbfC family. In terms of assembly, homodimer.

It localises to the cytoplasm. It is found in the nucleoid. In terms of biological role, binds to DNA and alters its conformation. May be involved in regulation of gene expression, nucleoid organization and DNA protection. This Moorella thermoacetica (strain ATCC 39073 / JCM 9320) protein is Nucleoid-associated protein Moth_0028.